The sequence spans 345 residues: MTDKTSLSYKDAGVDIDAGNALVDRIKGVVKQTKRPEVMGGLGGFGALCALPQKYREPILVSGTDGVGTKLRLAMDLKRHDTIGIDLVAMCVNDLVVQGAEPLFFLDYYATGKLDVDTAAAVITGIAEGCKQSGCALVGGETAEMPGMYHGEDYDVAGFCVGVVEKADIIDGSKVQAGDTLLALAASGPHSNGYSLVRKILSFSQTDPEQTQVEGKSLADHLLAPTCIYVKALLSLIAQTEVHAIAHLTGGGFWENIPRVLPAGTQAVIDKNSWQWPAVFRWLQQAGNVSRHEMYRTFNCGVGMVIAVPADSTAKALAILADLGETAWVLGQIHPADGEHQVIIR.

It belongs to the AIR synthase family.

It is found in the cytoplasm. The enzyme catalyses 2-formamido-N(1)-(5-O-phospho-beta-D-ribosyl)acetamidine + ATP = 5-amino-1-(5-phospho-beta-D-ribosyl)imidazole + ADP + phosphate + H(+). It functions in the pathway purine metabolism; IMP biosynthesis via de novo pathway; 5-amino-1-(5-phospho-D-ribosyl)imidazole from N(2)-formyl-N(1)-(5-phospho-D-ribosyl)glycinamide: step 2/2. The protein is Phosphoribosylformylglycinamidine cyclo-ligase of Sodalis glossinidius (strain morsitans).